Here is a 251-residue protein sequence, read N- to C-terminus: uncharacterized protein (251 aa).

12–21 (TGASSQGDIG) is an NADP(+) binding site. Substrate is bound at residue serine 148. Residue tyrosine 161 is the Proton acceptor of the active site.

It belongs to the short-chain dehydrogenases/reductases (SDR) family.

This is an uncharacterized protein from Bacillus subtilis (strain 168).